Here is a 524-residue protein sequence, read N- to C-terminus: mRNA cap guanine-N(7) methyltransferase (524 aa).

The tract at residues 1-155 (MSDKEAGVAS…DKKRAHDEAE (155 aa)) is disordered. Over residues 19–40 (NKDEVDVKNTEEHSKQESKSDI) the composition is skewed to basic and acidic residues. Polar residues predominate over residues 68-77 (NNKVISSVYN). Residues 90-99 (KTTDKYDKYG) are compositionally biased toward basic and acidic residues. Polar residues predominate over residues 100 to 112 (SRSTPIATPTAPV). In terms of domain architecture, mRNA cap 0 methyltransferase spans 214–522 (SPIYKLRNFN…FYIGFVFEKL (309 aa)). 223–224 (NN) is an mRNA binding site. Residues K227, C251, D273, D319, Q349, and Y354 each contribute to the S-adenosyl-L-methionine site.

This sequence belongs to the class I-like SAM-binding methyltransferase superfamily. mRNA cap 0 methyltransferase family.

It is found in the nucleus. It catalyses the reaction a 5'-end (5'-triphosphoguanosine)-ribonucleoside in mRNA + S-adenosyl-L-methionine = a 5'-end (N(7)-methyl 5'-triphosphoguanosine)-ribonucleoside in mRNA + S-adenosyl-L-homocysteine. Its function is as follows. Responsible for methylating the 5'-cap structure of mRNAs. The protein is mRNA cap guanine-N(7) methyltransferase (ABD1) of Debaryomyces hansenii (strain ATCC 36239 / CBS 767 / BCRC 21394 / JCM 1990 / NBRC 0083 / IGC 2968) (Yeast).